Consider the following 497-residue polypeptide: MSQTVSPPLYAAIDLGSNSFHMLVVRHIDGSVQTMAKIKRKVRLAAGLDENNALSTEAMQRGWDCLSLFAERLRDIPKENIRIVGTATLRTAINVDIFLEKANQILGYDINVISGEEEAATIYKGVAHTSGGSGRRLVVDIGGASTEMIIGEGFSAKALTSLKMGCVTWLERHFKDRQLTATNFNNAIEAAKSTLAPILDSYTDIGWDVCVGASGTVQALQEIMLAQGMDEVITHAKLKRLQKQAMITERLEELEIEGLTLERALVFPSGLSILIAIFELLEIDSMTLAGGALREGLAYEMVDEFRQEDIRARTIKSVQSRYQMDVSYSEQVAVVAQTLLEQAGAETWVSEPQAGVLLQTAAKLHEIGLTIDFKKGGEHSAYLLQNLDLPGFTRAQKHCLGELTRRYREQLTSLPEQHAISGTSSKRILRILRLAILLTHRRNPALEPEFKLTTDDNNLTLTLSKQWLADNPLTAAELEIESNRQTDIGWPLNIECL.

The protein belongs to the GppA/Ppx family. GppA subfamily.

The catalysed reaction is guanosine 3'-diphosphate 5'-triphosphate + H2O = guanosine 3',5'-bis(diphosphate) + phosphate + H(+). The protein operates within purine metabolism; ppGpp biosynthesis; ppGpp from GTP: step 2/2. Its function is as follows. Catalyzes the conversion of pppGpp to ppGpp. Guanosine pentaphosphate (pppGpp) is a cytoplasmic signaling molecule which together with ppGpp controls the 'stringent response', an adaptive process that allows bacteria to respond to amino acid starvation, resulting in the coordinated regulation of numerous cellular activities. The polypeptide is Guanosine-5'-triphosphate,3'-diphosphate pyrophosphatase (Vibrio atlanticus (strain LGP32) (Vibrio splendidus (strain Mel32))).